Consider the following 311-residue polypeptide: tRNA (guanine-N(7)-)-methyltransferase (311 aa).

Residues E28, E53, and D103 each contribute to the S-adenosyl-L-methionine site. D103 is an active-site residue. Residues K107 and D139 each coordinate substrate.

It belongs to the class I-like SAM-binding methyltransferase superfamily. TrmB family.

It carries out the reaction guanosine(46) in tRNA + S-adenosyl-L-methionine = N(7)-methylguanosine(46) in tRNA + S-adenosyl-L-homocysteine. It participates in tRNA modification; N(7)-methylguanine-tRNA biosynthesis. In terms of biological role, catalyzes the formation of N(7)-methylguanine at position 46 (m7G46) in tRNA. The protein is tRNA (guanine-N(7)-)-methyltransferase of Thermus thermophilus (strain ATCC BAA-163 / DSM 7039 / HB27).